We begin with the raw amino-acid sequence, 246 residues long: tRNA (guanine-N(1)-)-methyltransferase (246 aa).

Residues glycine 112 and 131-136 contribute to the S-adenosyl-L-methionine site; that span reads IGDYVL.

The protein belongs to the RNA methyltransferase TrmD family. In terms of assembly, homodimer.

Its subcellular location is the cytoplasm. The enzyme catalyses guanosine(37) in tRNA + S-adenosyl-L-methionine = N(1)-methylguanosine(37) in tRNA + S-adenosyl-L-homocysteine + H(+). Functionally, specifically methylates guanosine-37 in various tRNAs. This Fervidobacterium nodosum (strain ATCC 35602 / DSM 5306 / Rt17-B1) protein is tRNA (guanine-N(1)-)-methyltransferase.